The primary structure comprises 276 residues: ATP synthase subunit a (276 aa).

The next 6 membrane-spanning stretches (helical) occupy residues 47–67 (WHID…WLFY), 107–127 (IAPL…MDLI), 152–172 (DLNV…FYSI), 188–208 (PFNH…TLIA), 226–246 (LIFI…SVPW), and 247–267 (AIFH…LTIV).

Belongs to the ATPase A chain family. F-type ATPases have 2 components, CF(1) - the catalytic core - and CF(0) - the membrane proton channel. CF(1) has five subunits: alpha(3), beta(3), gamma(1), delta(1), epsilon(1). CF(0) has three main subunits: a(1), b(2) and c(9-12). The alpha and beta chains form an alternating ring which encloses part of the gamma chain. CF(1) is attached to CF(0) by a central stalk formed by the gamma and epsilon chains, while a peripheral stalk is formed by the delta and b chains.

The protein localises to the cell inner membrane. Functionally, key component of the proton channel; it plays a direct role in the translocation of protons across the membrane. In Shewanella halifaxensis (strain HAW-EB4), this protein is ATP synthase subunit a.